Consider the following 275-residue polypeptide: MAVKKFKPTSPGIRQMTVASFDEITKTKPEKSLLEPLKKKAGRNNQGKLTVRHQGGGHKRMYRVIDFKRIKDGIPAKVASIEYDPNRTSRIALLHYADGEKRYIIAPNGLNVGDTVVSGPDADIKTGNCLPLKNIPVGTLIHCIEMRPGKGGQLVRSAGAAAQLMAKEGEHATLRLPSGEMRKVLAECRATIGQMGNLEHENITIGKAGRKRWLGIRPTVRGVVMNPVDHPHGGGEGRSPIGRKAPVTPWGKVAIGGKTRRKKASDKLIIKRRTK.

The disordered stretch occupies residues 224-251 (VMNPVDHPHGGGEGRSPIGRKAPVTPWG).

The protein belongs to the universal ribosomal protein uL2 family. Part of the 50S ribosomal subunit. Forms a bridge to the 30S subunit in the 70S ribosome.

One of the primary rRNA binding proteins. Required for association of the 30S and 50S subunits to form the 70S ribosome, for tRNA binding and peptide bond formation. It has been suggested to have peptidyltransferase activity; this is somewhat controversial. Makes several contacts with the 16S rRNA in the 70S ribosome. This is Large ribosomal subunit protein uL2 from Heliobacterium modesticaldum (strain ATCC 51547 / Ice1).